Here is a 249-residue protein sequence, read N- to C-terminus: Aquaporin TIP4-3 (249 aa).

Helical transmembrane passes span 20–40 and 56–76; these read GVLG…GAAM and TAVA…GFHI. An NPA 1 motif is present at residues 82-84; the sequence is NPA. 3 helical membrane-spanning segments follow: residues 100–122, 141–161, and 169–189; these read SSLY…RWLT, GVVA…ATIL, and GAGP…GAAL. The short motif at 195-197 is the NPA 2 element; it reads NPA. Residues 214 to 234 form a helical membrane-spanning segment; sequence VYWVGPLAGGPLAVLVYECCF.

This sequence belongs to the MIP/aquaporin (TC 1.A.8) family. TIP (TC 1.A.8.10) subfamily.

It localises to the vacuole membrane. In terms of biological role, aquaporins facilitate the transport of water and small neutral solutes across cell membranes. In Zea mays (Maize), this protein is Aquaporin TIP4-3 (TIP4-3).